We begin with the raw amino-acid sequence, 695 residues long: MKMKSQATMICCLVFFLSTECSHYRSKIHLKAGDKLQSPEGKPKTGRIQEKCEGPCISSSNCSQPCAKDFHGEIGFTCNQKKWQKSAETCTSLSVEKLFKDSTGASRLSVAAPSIPLHILDFRAPETIESVAQGIRKNCPFDYACITDMVKSSETTSGNIAFIVELLKNISTDLSDNVTREKMKSYSEVANHILDTAAISNWAFIPNKNASSDLLQSVNLFARQLHIHNNSENIVNELFIQTKGFHINHNTSEKSLNFSMSMNNTTEDILGMVQIPRQELRKLWPNASQAISIAFPTLGAILREAHLQNVSLPRQVNGLVLSVVLPERLQEIILTFEKINKTRNARAQCVGWHSKKRRWDEKACQMMLDIRNEVKCRCNYTSVVMSFSILMSSKSMTDKVLDYITCIGLSVSILSLVLCLIIEATVWSRVVVTEISYMRHVCIVNIAVSLLTANVWFIIGSHFNIKAQDYNMCVAVTFFSHFFYLSLFFWMLFKALLIIYGILVIFRRMMKSRMMVIGFAIGYGCPLIIAVTTVAITEPEKGYMRPEACWLNWDNTKALLAFAIPAFVIVAVNLIVVLVVAVNTQRPSIGSSKSQDVVIIMRISKNVAILTPLLGLTWGFGIATLIEGTSLTFHIIFALLNAFQGFFILLFGTIMDHKIRDALRMRMSSLKGKSRAAENASLGPTNGSKLMNRQG.

Residues 1–21 (MKMKSQATMICCLVFFLSTEC) form the signal peptide. The Extracellular portion of the chain corresponds to 22-406 (SHYRSKIHLK…TDKVLDYITC (385 aa)). 12 N-linked (GlcNAc...) asparagine glycosylation sites follow: asparagine 61, asparagine 169, asparagine 177, asparagine 209, asparagine 229, asparagine 250, asparagine 257, asparagine 263, asparagine 264, asparagine 286, asparagine 309, and asparagine 340. The GAIN-B domain occupies 249–397 (HNTSEKSLNF…SILMSSKSMT (149 aa)). Disulfide bonds link cysteine 349–cysteine 376 and cysteine 364–cysteine 378. Positions 349 to 397 (CVGWHSKKRRWDEKACQMMLDIRNEVKCRCNYTSVVMSFSILMSSKSMT) are GPS. Residue asparagine 379 is glycosylated (N-linked (GlcNAc...) asparagine). The chain crosses the membrane as a helical span at residues 407-427 (IGLSVSILSLVLCLIIEATVW). The Cytoplasmic portion of the chain corresponds to 428-440 (SRVVVTEISYMRH). Residues 441-461 (VCIVNIAVSLLTANVWFIIGS) form a helical membrane-spanning segment. Residues 462-485 (HFNIKAQDYNMCVAVTFFSHFFYL) lie on the Extracellular side of the membrane. Residues 486 to 506 (SLFFWMLFKALLIIYGILVIF) form a helical membrane-spanning segment. At 507 to 515 (RRMMKSRMM) the chain is on the cytoplasmic side. The chain crosses the membrane as a helical span at residues 516–536 (VIGFAIGYGCPLIIAVTTVAI). Residues 537-561 (TEPEKGYMRPEACWLNWDNTKALLA) lie on the Extracellular side of the membrane. A helical transmembrane segment spans residues 562–582 (FAIPAFVIVAVNLIVVLVVAV). Topologically, residues 583–606 (NTQRPSIGSSKSQDVVIIMRISKN) are cytoplasmic. The helical transmembrane segment at 607-627 (VAILTPLLGLTWGFGIATLIE) threads the bilayer. Over 628–634 (GTSLTFH) the chain is Extracellular. Residues 635 to 655 (IIFALLNAFQGFFILLFGTIM) form a helical membrane-spanning segment. Residues 656–695 (DHKIRDALRMRMSSLKGKSRAAENASLGPTNGSKLMNRQG) lie on the Cytoplasmic side of the membrane. Residues 674–695 (SRAAENASLGPTNGSKLMNRQG) are disordered. Residues 682-695 (LGPTNGSKLMNRQG) show a composition bias toward polar residues.

It belongs to the G-protein coupled receptor 2 family. Adhesion G-protein coupled receptor (ADGR) subfamily.

It is found in the membrane. Its function is as follows. Orphan receptor. The sequence is that of Adhesion G protein-coupled receptor F4 (ADGRF4) from Homo sapiens (Human).